A 480-amino-acid chain; its full sequence is Acyl-coenzyme A synthetase ACSM6, mitochondrial (480 aa).

The N-terminal 21 residues, 1-21 (MLGRFQPFSLVRSFRLGFEAC), are a transit peptide targeting the mitochondrion. Residues 226–234 (TKGTTGAPK), 366–371 (EGYGQT), D453, and R468 each bind ATP.

Belongs to the ATP-dependent AMP-binding enzyme family. As to quaternary structure, monomer. It depends on Mg(2+) as a cofactor. Mn(2+) is required as a cofactor.

The protein resides in the mitochondrion. The enzyme catalyses a medium-chain fatty acid + ATP + CoA = a medium-chain fatty acyl-CoA + AMP + diphosphate. In terms of biological role, catalyzes the activation of fatty acids by CoA to produce an acyl-CoA, the first step in fatty acid metabolism. The chain is Acyl-coenzyme A synthetase ACSM6, mitochondrial (ACSM6) from Homo sapiens (Human).